The primary structure comprises 67 residues: DNA-directed RNA polymerase subunit omega (67 aa).

Belongs to the RNA polymerase subunit omega family. In terms of assembly, the RNAP catalytic core consists of 2 alpha, 1 beta, 1 beta' and 1 omega subunit. When a sigma factor is associated with the core the holoenzyme is formed, which can initiate transcription.

It carries out the reaction RNA(n) + a ribonucleoside 5'-triphosphate = RNA(n+1) + diphosphate. Its function is as follows. Promotes RNA polymerase assembly. Latches the N- and C-terminal regions of the beta' subunit thereby facilitating its interaction with the beta and alpha subunits. In Bordetella pertussis (strain Tohama I / ATCC BAA-589 / NCTC 13251), this protein is DNA-directed RNA polymerase subunit omega.